The chain runs to 201 residues: Alpha-1-acid glycoprotein 2 (201 aa).

An N-terminal signal peptide occupies residues 1-18; the sequence is MALSWVLTVLSLLPLLEA. Gln-19 carries the post-translational modification Pyrrolidone carboxylic acid. Disulfide bonds link Cys-23–Cys-165 and Cys-90–Cys-183. Asn-33 is a glycosylation site (N-linked (GlcNAc...) (complex) asparagine). Residues Asn-56, Asn-72, Asn-93, and Asn-103 are each glycosylated (N-linked (GlcNAc...) asparagine).

It belongs to the calycin superfamily. Lipocalin family. In terms of processing, N-glycosylated. N-glycan heterogeneity at Asn-33: Hex5HexNAc4 (minor), Hex6HexNAc5 (major) and dHex1Hex6HexNAc5 (minor). Expressed by the liver and secreted in plasma.

The protein resides in the secreted. Its function is as follows. Functions as a transport protein in the blood stream. Binds various hydrophobic ligands in the interior of its beta-barrel domain. Also binds synthetic drugs and influences their distribution and availability. Appears to function in modulating the activity of the immune system during the acute-phase reaction. This chain is Alpha-1-acid glycoprotein 2 (ORM2), found in Homo sapiens (Human).